We begin with the raw amino-acid sequence, 412 residues long: Palmitoyltransferase ZDHHC6 (412 aa).

Over 1–24 (MNILSAIIVFENLHEVKRLFHWGP) the chain is Cytoplasmic. Residues 25–45 (IIALTVIGVCSSMAILDSIIW) form a helical membrane-spanning segment. Residues 46-57 (YWPLDTTGGSIN) are Lumenal-facing. A helical membrane pass occupies residues 58–78 (FIMLINWTVLILYNYFNAMFV). The Cytoplasmic portion of the chain corresponds to 79 to 143 (GPGYIPLEWK…NCCGHLNHAY (65 aa)). The DHHC domain maps to 99-149 (QFCRLCQGYKAPRSHHCRKCNRCVMKMDHHCPWINNCCGHLNHAYFTSFLL). The S-palmitoyl cysteine intermediate role is filled by C129. A helical transmembrane segment spans residues 144 to 164 (FTSFLLLAPLGCIHAALIFIM). The Lumenal portion of the chain corresponds to 165 to 205 (TMYTQLYDRISFGWSSVKIDMSAARHIHHPIMPFSIAAFAA). Residues 206-226 (TLFALGLALGTTIAVGMLFFI) form a helical membrane-spanning segment. Residues 227 to 412 (QMKVILRNRT…NSTSEEKKEQ (186 aa)) lie on the Cytoplasmic side of the membrane. One can recognise an SH3 domain in the interval 313–398 (QRSVEYRVVE…PRRCVEKCLY (86 aa)). S-palmitoyl cysteine attachment occurs at residues C328, C329, and C343. A Di-lysine motif motif is present at residues 409–412 (KKEQ).

Belongs to the DHHC palmitoyltransferase family.

Its subcellular location is the endoplasmic reticulum membrane. The enzyme catalyses L-cysteinyl-[protein] + hexadecanoyl-CoA = S-hexadecanoyl-L-cysteinyl-[protein] + CoA. It catalyses the reaction L-cysteinyl-[protein] + octadecanoyl-CoA = S-octadecanoyl-L-cysteinyl-[protein] + CoA. Endoplasmic reticulum palmitoyl acyltransferase that probably catalyzes the addition of palmitate onto various protein substrates and is involved in a variety of cellular processes. Could also function as a stearoyltransferase. In Danio rerio (Zebrafish), this protein is Palmitoyltransferase ZDHHC6.